The sequence spans 827 residues: Periplasmic nitrate reductase (827 aa).

The segment at residues 1-34 (MSLTRRDFIKANAVPATAAAAGLATPAIAQPAKA) is a signal peptide (tat-type signal). In terms of domain architecture, 4Fe-4S Mo/W bis-MGD-type spans 36-92 (IRWDKGVCRFCGTGCSVLVGVQDGRVVATQGDPDSPVNRGLNCIKGYFLSKIMYGED). [4Fe-4S] cluster-binding residues include cysteine 43, cysteine 46, cysteine 50, and cysteine 78. Mo-bis(molybdopterin guanine dinucleotide)-binding positions include lysine 80, glutamine 148, asparagine 173, cysteine 177, 210-217 (WGSNMAEM), 241-245 (STFEH), 260-262 (QTD), methionine 371, glutamine 375, asparagine 481, 507-508 (SD), lysine 530, aspartate 557, and 717-726 (TGRVLEHWHS). Phenylalanine 793 contacts substrate. Asparagine 801 and lysine 818 together coordinate Mo-bis(molybdopterin guanine dinucleotide).

It belongs to the prokaryotic molybdopterin-containing oxidoreductase family. NasA/NapA/NarB subfamily. In terms of assembly, component of the periplasmic nitrate reductase NapAB complex composed of NapA and NapB. [4Fe-4S] cluster serves as cofactor. The cofactor is Mo-bis(molybdopterin guanine dinucleotide). Post-translationally, predicted to be exported by the Tat system. The position of the signal peptide cleavage has not been experimentally proven.

Its subcellular location is the periplasm. It catalyses the reaction 2 Fe(II)-[cytochrome] + nitrate + 2 H(+) = 2 Fe(III)-[cytochrome] + nitrite + H2O. In terms of biological role, catalytic subunit of the periplasmic nitrate reductase complex NapAB. Receives electrons from NapB and catalyzes the reduction of nitrate to nitrite. The chain is Periplasmic nitrate reductase from Paramagnetospirillum magnetotacticum (Aquaspirillum magnetotacticum).